The primary structure comprises 72 residues: Cytochrome b-c1 complex subunit 8-1, mitochondrial (72 aa).

The Mitochondrial matrix portion of the chain corresponds to 1–41; that stretch reads MGKQPVKLKAVVYALSPFQQKIMTGLWKDLPEKIHHKVSEN. Residues 42 to 58 form a helical membrane-spanning segment; that stretch reads WISATLLVTPVVGTYWY. The Mitochondrial intermembrane portion of the chain corresponds to 59-72; the sequence is AQYFKEQEKLEHRF.

The protein belongs to the UQCRQ/QCR8 family. In terms of assembly, component of the ubiquinol-cytochrome c oxidoreductase (cytochrome b-c1 complex, complex III, CIII), a multisubunit enzyme composed of 10 subunits. The complex is composed of 3 respiratory subunits cytochrome b (MT-CYB), cytochrome c1 (CYC1-1 or CYC1-2) and Rieske protein (UCR1-1 or UCR1-2), 2 core protein subunits MPPalpha1 (or MPPalpha2) and MPPB, and 5 low-molecular weight protein subunits QCR7-1 (or QCR7-2), UCRQ-1 (or UCRQ-2), QCR9, UCRY and probably QCR6-1 (or QCR6-2). The complex exists as an obligatory dimer and forms supercomplexes (SCs) in the inner mitochondrial membrane with NADH-ubiquinone oxidoreductase (complex I, CI), resulting in different assemblies (supercomplexes SCI(1)III(2) and SCI(2)III(4)).

It localises to the mitochondrion inner membrane. Its function is as follows. Component of the ubiquinol-cytochrome c oxidoreductase, a multisubunit transmembrane complex that is part of the mitochondrial electron transport chain which drives oxidative phosphorylation. The respiratory chain contains 3 multisubunit complexes succinate dehydrogenase (complex II, CII), ubiquinol-cytochrome c oxidoreductase (cytochrome b-c1 complex, complex III, CIII) and cytochrome c oxidase (complex IV, CIV), that cooperate to transfer electrons derived from NADH and succinate to molecular oxygen, creating an electrochemical gradient over the inner membrane that drives transmembrane transport and the ATP synthase. The cytochrome b-c1 complex catalyzes electron transfer from ubiquinol to cytochrome c, linking this redox reaction to translocation of protons across the mitochondrial inner membrane, with protons being carried across the membrane as hydrogens on the quinol. In the process called Q cycle, 2 protons are consumed from the matrix, 4 protons are released into the intermembrane space and 2 electrons are passed to cytochrome c. This is Cytochrome b-c1 complex subunit 8-1, mitochondrial (UCRQ-1) from Arabidopsis thaliana (Mouse-ear cress).